Here is a 160-residue protein sequence, read N- to C-terminus: Serine-protein kinase RsbW (160 aa).

Belongs to the anti-sigma-factor family.

It carries out the reaction L-seryl-[protein] + ATP = O-phospho-L-seryl-[protein] + ADP + H(+). It catalyses the reaction L-threonyl-[protein] + ATP = O-phospho-L-threonyl-[protein] + ADP + H(+). Functionally, negative regulator of sigma-B activity. Phosphorylates and inactivates its specific antagonist protein, RsbV. Upon phosphorylation of RsbV, RsbW is released and binds to sigma-B, thereby blocking its ability to form an RNA polymerase holoenzyme (E-sigma-B). The sequence is that of Serine-protein kinase RsbW from Bacillus cereus (strain G9842).